The following is a 482-amino-acid chain: Proline--tRNA ligase (482 aa).

Belongs to the class-II aminoacyl-tRNA synthetase family. ProS type 3 subfamily. In terms of assembly, homodimer.

The protein resides in the cytoplasm. The catalysed reaction is tRNA(Pro) + L-proline + ATP = L-prolyl-tRNA(Pro) + AMP + diphosphate. Functionally, catalyzes the attachment of proline to tRNA(Pro) in a two-step reaction: proline is first activated by ATP to form Pro-AMP and then transferred to the acceptor end of tRNA(Pro). This chain is Proline--tRNA ligase, found in Mycoplasmopsis synoviae (strain 53) (Mycoplasma synoviae).